We begin with the raw amino-acid sequence, 265 residues long: Phosphate import ATP-binding protein PstB (265 aa).

Residues 18–260 (MECRDCHVYY…PEDPRTESYI (243 aa)) form the ABC transporter domain. Residue 50 to 57 (GPSGCGKS) coordinates ATP.

This sequence belongs to the ABC transporter superfamily. Phosphate importer (TC 3.A.1.7) family. The complex is composed of two ATP-binding proteins (PstB), two transmembrane proteins (PstC and PstA) and a solute-binding protein (PstS).

It localises to the cell inner membrane. The enzyme catalyses phosphate(out) + ATP + H2O = ADP + 2 phosphate(in) + H(+). Its function is as follows. Part of the ABC transporter complex PstSACB involved in phosphate import. Responsible for energy coupling to the transport system. In Ruegeria pomeroyi (strain ATCC 700808 / DSM 15171 / DSS-3) (Silicibacter pomeroyi), this protein is Phosphate import ATP-binding protein PstB.